We begin with the raw amino-acid sequence, 164 residues long: Protein-export protein SecB (164 aa).

Belongs to the SecB family. In terms of assembly, homotetramer, a dimer of dimers. One homotetramer interacts with 1 SecA dimer.

The protein localises to the cytoplasm. One of the proteins required for the normal export of preproteins out of the cell cytoplasm. It is a molecular chaperone that binds to a subset of precursor proteins, maintaining them in a translocation-competent state. It also specifically binds to its receptor SecA. This Caulobacter sp. (strain K31) protein is Protein-export protein SecB.